The chain runs to 298 residues: Probable GTP 3',8-cyclase (298 aa).

Residues Arg4–Asp227 form the Radical SAM core domain. Arg13 provides a ligand contact to GTP. The [4Fe-4S] cluster site is built by Cys20 and Cys24. Tyr26 serves as a coordination point for S-adenosyl-L-methionine. Position 27 (Cys27) interacts with [4Fe-4S] cluster. Residue Lys61 coordinates GTP. Residue Gly65 coordinates S-adenosyl-L-methionine. Thr91 provides a ligand contact to GTP. Ser115 contributes to the S-adenosyl-L-methionine binding site. Position 152 (Lys152) interacts with GTP. [4Fe-4S] cluster-binding residues include Cys243 and Cys246. Arg248–Arg250 serves as a coordination point for GTP. Residue Cys260 participates in [4Fe-4S] cluster binding.

It belongs to the radical SAM superfamily. MoaA family. It depends on [4Fe-4S] cluster as a cofactor.

The enzyme catalyses GTP + AH2 + S-adenosyl-L-methionine = (8S)-3',8-cyclo-7,8-dihydroguanosine 5'-triphosphate + 5'-deoxyadenosine + L-methionine + A + H(+). The protein operates within cofactor biosynthesis; molybdopterin biosynthesis. Functionally, catalyzes the cyclization of GTP to (8S)-3',8-cyclo-7,8-dihydroguanosine 5'-triphosphate. The protein is Probable GTP 3',8-cyclase of Methanococcus maripaludis (strain C5 / ATCC BAA-1333).